The sequence spans 117 residues: Large ribosomal subunit protein bL19 (117 aa).

The protein belongs to the bacterial ribosomal protein bL19 family.

Functionally, this protein is located at the 30S-50S ribosomal subunit interface and may play a role in the structure and function of the aminoacyl-tRNA binding site. This Bacteroides fragilis (strain ATCC 25285 / DSM 2151 / CCUG 4856 / JCM 11019 / LMG 10263 / NCTC 9343 / Onslow / VPI 2553 / EN-2) protein is Large ribosomal subunit protein bL19.